We begin with the raw amino-acid sequence, 834 residues long: Protein argonaute (834 aa).

One can recognise a PAZ domain in the interval 210-326 (SLLQILMEYT…LPIEFCFVVK (117 aa)). The Piwi domain maps to 500–799 (YLFFILDKNS…VSNLARYQDV (300 aa)).

This sequence belongs to the argonaute family. Ago subfamily. As to quaternary structure, ago1, chp1 and tas3 interact to form the core of the RNA-induced transcriptional silencing (RITS) complex. The RITS complex interacts with the RDRC complex via interaction between ago1 and hrr1. Clr4 has a role in mediating this interaction. Component of the argonaute siRNA chaperone (ARC) complex composed of ago1, arb1 and arb2. Interacts with arb1.

Its subcellular location is the cytoplasm. It localises to the nucleus. It is found in the chromosome. The protein localises to the centromere. The protein resides in the telomere. In terms of biological role, required for G1 arrest and mating in response to nitrogen starvation. Ago1 regulation of cytokinesis and cell cycle checkpoints occurs downstream of dcr1. Required, indirectly, for regulated hyperphosphorylation of cdc2. Has a role in the RNA interference (RNAi) pathway which is important for heterochromatin formation, accurate chromosome segregation, centromere cohesion and telomere function during mitosis and meiosis. Required for silencing at the centromeres and for initiation of transcriptionally silent heterochromatin at the mating type locus. Promotes histone H3K9 methylation necessary for centromere function. Required for recruitment of swi6 and cohesin to an ectopic dg repeat. A member of the RNA-induced transcriptional silencing (RITS) complex which is involved in the biosynthesis of dsRNA from primer siRNAs provided by the RNA-directed RNA polymerase (RDRC) complex. Has ribonuclease H-like cleavage (slicing) activity towards target messages complementary to siRNA and can direct site-specific cleavage of RNA substrates via siRNA. Slicing activity is required for both post-transcriptional and transcriptional gene silencing as well as for histone H3 'Lys-10' methylation spreading, conversion of double-stranded siRNA to single-stranded siRNA and siRNA-dependent association of ago1 with chromatin. A member of the argonaute siRNA chaperone (ARC) complex which is required for histone H3K9 methylation, heterochromatin assembly and siRNA generation. The ARC complex contains mostly double-stranded siRNA. This Schizosaccharomyces pombe (strain 972 / ATCC 24843) (Fission yeast) protein is Protein argonaute (ago1).